A 305-amino-acid polypeptide reads, in one-letter code: Methionyl-tRNA formyltransferase (305 aa).

111–114 is a binding site for (6S)-5,6,7,8-tetrahydrofolate; the sequence is SLLP.

It belongs to the Fmt family.

The catalysed reaction is L-methionyl-tRNA(fMet) + (6R)-10-formyltetrahydrofolate = N-formyl-L-methionyl-tRNA(fMet) + (6S)-5,6,7,8-tetrahydrofolate + H(+). In terms of biological role, attaches a formyl group to the free amino group of methionyl-tRNA(fMet). The formyl group appears to play a dual role in the initiator identity of N-formylmethionyl-tRNA by promoting its recognition by IF2 and preventing the misappropriation of this tRNA by the elongation apparatus. The chain is Methionyl-tRNA formyltransferase from Campylobacter jejuni subsp. doylei (strain ATCC BAA-1458 / RM4099 / 269.97).